A 313-amino-acid chain; its full sequence is 4-diphosphocytidyl-2-C-methyl-D-erythritol kinase (313 aa).

K10 is an active-site residue. Residue 95–105 coordinates ATP; the sequence is PVTAGLGGGSS. The active site involves D136. The segment at 289-313 is disordered; it reads HPRVSPWRSPRSASSRSTRRSSRPT. Positions 292 to 304 are enriched in low complexity; the sequence is VSPWRSPRSASSR.

It belongs to the GHMP kinase family. IspE subfamily.

It catalyses the reaction 4-CDP-2-C-methyl-D-erythritol + ATP = 4-CDP-2-C-methyl-D-erythritol 2-phosphate + ADP + H(+). It participates in isoprenoid biosynthesis; isopentenyl diphosphate biosynthesis via DXP pathway; isopentenyl diphosphate from 1-deoxy-D-xylulose 5-phosphate: step 3/6. Its function is as follows. Catalyzes the phosphorylation of the position 2 hydroxy group of 4-diphosphocytidyl-2C-methyl-D-erythritol. The chain is 4-diphosphocytidyl-2-C-methyl-D-erythritol kinase from Anaeromyxobacter dehalogenans (strain 2CP-1 / ATCC BAA-258).